We begin with the raw amino-acid sequence, 344 residues long: Dihydroorotase (344 aa).

The Zn(2+) site is built by His13 and His15. Substrate is bound by residues 15–17 (HLR) and Asn41. Residues Lys99, His136, and His174 each contribute to the Zn(2+) site. N6-carboxylysine is present on Lys99. Position 136 (His136) interacts with substrate. Leu219 contributes to the substrate binding site. Asp247 is a binding site for Zn(2+). Asp247 is a catalytic residue. Positions 251 and 263 each coordinate substrate.

The protein belongs to the metallo-dependent hydrolases superfamily. DHOase family. Class II DHOase subfamily. In terms of assembly, homodimer. It depends on Zn(2+) as a cofactor.

The enzyme catalyses (S)-dihydroorotate + H2O = N-carbamoyl-L-aspartate + H(+). It participates in pyrimidine metabolism; UMP biosynthesis via de novo pathway; (S)-dihydroorotate from bicarbonate: step 3/3. In terms of biological role, catalyzes the reversible cyclization of carbamoyl aspartate to dihydroorotate. The chain is Dihydroorotase from Acinetobacter baumannii (strain AB307-0294).